The primary structure comprises 100 residues: Urease subunit gamma (100 aa).

This sequence belongs to the urease gamma subunit family. In terms of assembly, heterotrimer of UreA (gamma), UreB (beta) and UreC (alpha) subunits. Three heterotrimers associate to form the active enzyme.

Its subcellular location is the cytoplasm. It catalyses the reaction urea + 2 H2O + H(+) = hydrogencarbonate + 2 NH4(+). It functions in the pathway nitrogen metabolism; urea degradation; CO(2) and NH(3) from urea (urease route): step 1/1. This chain is Urease subunit gamma, found in Prochlorococcus marinus (strain MIT 9312).